Here is a 113-residue protein sequence, read N- to C-terminus: Pancreatic progenitor cell differentiation and proliferation factor A (113 aa).

The protein belongs to the PPDPF family.

Its function is as follows. Probable regulator of exocrine pancreas development. This chain is Pancreatic progenitor cell differentiation and proliferation factor A (ppdpf-a), found in Xenopus laevis (African clawed frog).